Here is a 154-residue protein sequence, read N- to C-terminus: Ribosome maturation factor RimP (154 aa).

It belongs to the RimP family.

The protein localises to the cytoplasm. In terms of biological role, required for maturation of 30S ribosomal subunits. This chain is Ribosome maturation factor RimP, found in Alkaliphilus oremlandii (strain OhILAs) (Clostridium oremlandii (strain OhILAs)).